The primary structure comprises 303 residues: Putative S-adenosyl-L-methionine-dependent methyltransferase MAP_4197c (303 aa).

Residues Asp129 and 158 to 159 (DL) each bind S-adenosyl-L-methionine.

The protein belongs to the UPF0677 family.

Exhibits S-adenosyl-L-methionine-dependent methyltransferase activity. The polypeptide is Putative S-adenosyl-L-methionine-dependent methyltransferase MAP_4197c (Mycolicibacterium paratuberculosis (strain ATCC BAA-968 / K-10) (Mycobacterium paratuberculosis)).